The following is a 125-amino-acid chain: Large ribosomal subunit protein bL19 (125 aa).

Belongs to the bacterial ribosomal protein bL19 family.

Functionally, this protein is located at the 30S-50S ribosomal subunit interface and may play a role in the structure and function of the aminoacyl-tRNA binding site. The polypeptide is Large ribosomal subunit protein bL19 (Wolbachia pipientis subsp. Culex pipiens (strain wPip)).